We begin with the raw amino-acid sequence, 494 residues long: Subtilisin-like serine protease Pen ch 18.0101 (494 aa).

A signal peptide spans 1-16 (MKGFLSLTLLPLLVAA). A propeptide spans 17-136 (SPVAVNSIHN…IEKDSEVRTM (120 aa)) (removed in mature form). Residues 43–136 (SYIVVFKKHV…IEKDSEVRTM (94 aa)) form the Inhibitor I9 domain. In terms of domain architecture, Peptidase S8 spans 146 to 448 (PWGLARISHR…GGSANYTKIL (303 aa)). IgE-binding stretches follow at residues 180-198 (VIDT…RANW) and 209-231 (EDGN…GVAK). Catalysis depends on charge relay system residues Asp-182 and His-214. 2 N-linked (GlcNAc...) asparagine glycosylation sites follow: Asn-244 and Asn-280. The active-site Charge relay system is Ser-376. A glycan (N-linked (GlcNAc...) asparagine) is linked at Asn-443. The propeptide at 454 to 494 (KAHNAETTVEDRIGIIIDSAEKAFHKELGAIYSEIKDAVSV) is removed in mature form.

It belongs to the peptidase S8 family.

Functionally, serine protease. The sequence is that of Subtilisin-like serine protease Pen ch 18.0101 from Penicillium rubens.